The primary structure comprises 248 residues: Probable transcriptional regulatory protein PFL_4766 (248 aa).

The protein belongs to the TACO1 family.

It is found in the cytoplasm. The chain is Probable transcriptional regulatory protein PFL_4766 from Pseudomonas fluorescens (strain ATCC BAA-477 / NRRL B-23932 / Pf-5).